The sequence spans 155 residues: Small ribosomal subunit protein uS7 (155 aa).

Belongs to the universal ribosomal protein uS7 family. As to quaternary structure, part of the 30S ribosomal subunit. Contacts proteins S9 and S11.

In terms of biological role, one of the primary rRNA binding proteins, it binds directly to 16S rRNA where it nucleates assembly of the head domain of the 30S subunit. Is located at the subunit interface close to the decoding center, probably blocks exit of the E-site tRNA. This chain is Small ribosomal subunit protein uS7, found in Sulfurimonas denitrificans (strain ATCC 33889 / DSM 1251) (Thiomicrospira denitrificans (strain ATCC 33889 / DSM 1251)).